The following is a 311-amino-acid chain: ATP synthase gamma chain (311 aa).

It belongs to the ATPase gamma chain family. As to quaternary structure, F-type ATPases have 2 components, CF(1) - the catalytic core - and CF(0) - the membrane proton channel. CF(1) has five subunits: alpha(3), beta(3), gamma(1), delta(1), epsilon(1). CF(0) has three main subunits: a, b and c.

The protein resides in the cell membrane. In terms of biological role, produces ATP from ADP in the presence of a proton gradient across the membrane. The gamma chain is believed to be important in regulating ATPase activity and the flow of protons through the CF(0) complex. The sequence is that of ATP synthase gamma chain from Limosilactobacillus fermentum (strain NBRC 3956 / LMG 18251) (Lactobacillus fermentum).